The following is a 406-amino-acid chain: Angiopoietin-related protein 4 (406 aa).

A signal peptide spans 1-25; that stretch reads MSGAPTAGAALMLCAATAVLLSAQG. Residues 100-143 adopt a coiled-coil conformation; that stretch reads EVLHSLQTQLKAQNSRIQQLFHKVAQQQRHLEKQHLRIQHLQSQ. Asn-177 is a glycosylation site (N-linked (GlcNAc...) asparagine). Residues 179-401 form the Fibrinogen C-terminal domain; it reads SRLHRLPRDC…ATTMLIQPMA (223 aa). Disulfide bonds link Cys-188/Cys-216 and Cys-341/Cys-354.

Homooligomer; disulfide-linked via Cys residues in the N-terminal part of the protein. The homooligomer undergoes proteolytic processing to release the ANGPTL4 C-terminal chain, which circulates as a monomer. The homooligomer unprocessed form is able to interact with the extracellular matrix. N-glycosylated. Post-translationally, forms disulfide-linked dimers and tetramers. In terms of processing, cleaved into a smaller N-terminal chain and a larger chain that contains the fibrinogen C-terminal domain; both cleaved and uncleaved forms are detected in the extracellular space. The cleaved form is not present within the cell. As to expression, detected in blood plasma (at protein level). Detected in liver. Detected in white fat tissue and placenta. Expressed at high levels in the placenta, heart, liver, muscle, pancreas and lung but expressed poorly in the brain and kidney.

Its subcellular location is the secreted. It localises to the extracellular space. It is found in the extracellular matrix. In terms of biological role, mediates inactivation of the lipoprotein lipase LPL, and thereby plays a role in the regulation of triglyceride clearance from the blood serum and in lipid metabolism. May also play a role in regulating glucose homeostasis and insulin sensitivity. Inhibits proliferation, migration, and tubule formation of endothelial cells and reduces vascular leakage. Upon heterologous expression, inhibits the adhesion of endothelial cell to the extracellular matrix (ECM), and inhibits the reorganization of the actin cytoskeleton, formation of actin stress fibers and focal adhesions in endothelial cells that have adhered to ANGPTL4-containing ECM (in vitro). Depending on context, may modulate tumor-related angiogenesis. Mediates inactivation of the lipoprotein lipase LPL, and thereby plays an important role in the regulation of triglyceride clearance from the blood serum and in lipid metabolism. Has higher activity in LPL inactivation than the uncleaved protein. This Homo sapiens (Human) protein is Angiopoietin-related protein 4 (ANGPTL4).